The following is a 142-amino-acid chain: Large ribosomal subunit protein uL11 (142 aa).

It belongs to the universal ribosomal protein uL11 family. In terms of assembly, part of the ribosomal stalk of the 50S ribosomal subunit. Interacts with L10 and the large rRNA to form the base of the stalk. L10 forms an elongated spine to which L12 dimers bind in a sequential fashion forming a multimeric L10(L12)X complex. Post-translationally, one or more lysine residues are methylated.

Forms part of the ribosomal stalk which helps the ribosome interact with GTP-bound translation factors. This is Large ribosomal subunit protein uL11 from Tolumonas auensis (strain DSM 9187 / NBRC 110442 / TA 4).